Consider the following 876-residue polypeptide: Alanine--tRNA ligase (876 aa).

K74 is modified (N6-acetyllysine). The Zn(2+) site is built by H564, H568, C666, and H670.

This sequence belongs to the class-II aminoacyl-tRNA synthetase family. In terms of assembly, homotetramer. Zn(2+) serves as cofactor.

Its subcellular location is the cytoplasm. The catalysed reaction is tRNA(Ala) + L-alanine + ATP = L-alanyl-tRNA(Ala) + AMP + diphosphate. Functionally, catalyzes the attachment of alanine to tRNA(Ala) in a two-step reaction: alanine is first activated by ATP to form Ala-AMP and then transferred to the acceptor end of tRNA(Ala). Also edits incorrectly charged Ser-tRNA(Ala) and Gly-tRNA(Ala) via its editing domain. The protein is Alanine--tRNA ligase of Shigella sonnei (strain Ss046).